Consider the following 90-residue polypeptide: Small ribosomal subunit protein uS15 (90 aa).

This sequence belongs to the universal ribosomal protein uS15 family. As to quaternary structure, part of the 30S ribosomal subunit. Forms a bridge to the 50S subunit in the 70S ribosome, contacting the 23S rRNA.

Functionally, one of the primary rRNA binding proteins, it binds directly to 16S rRNA where it helps nucleate assembly of the platform of the 30S subunit by binding and bridging several RNA helices of the 16S rRNA. In terms of biological role, forms an intersubunit bridge (bridge B4) with the 23S rRNA of the 50S subunit in the ribosome. In Wolbachia pipientis subsp. Culex pipiens (strain wPip), this protein is Small ribosomal subunit protein uS15.